The following is a 108-amino-acid chain: Translation initiation factor 1A (108 aa).

The S1-like domain maps to 11 to 85; that stretch reads PSKDVPKPEE…TKADIVYRYM (75 aa).

It belongs to the eIF-1A family.

Functionally, seems to be required for maximal rate of protein biosynthesis. Enhances ribosome dissociation into subunits and stabilizes the binding of the initiator Met-tRNA(I) to 40 S ribosomal subunits. The protein is Translation initiation factor 1A (eIF1A) of Metallosphaera sedula (strain ATCC 51363 / DSM 5348 / JCM 9185 / NBRC 15509 / TH2).